The sequence spans 174 residues: ATP synthase subunit b, organellar chromatophore (174 aa).

The helical transmembrane segment at Leu26–Glu46 threads the bilayer.

Belongs to the ATPase B chain family. As to quaternary structure, F-type ATPases have 2 components, F(1) - the catalytic core - and F(0) - the membrane proton channel. F(1) has five subunits: alpha(3), beta(3), gamma(1), delta(1), epsilon(1). F(0) has four main subunits: a(1), b(1), b'(1) and c(10-14). The alpha and beta chains form an alternating ring which encloses part of the gamma chain. F(1) is attached to F(0) by a central stalk formed by the gamma and epsilon chains, while a peripheral stalk is formed by the delta, b and b' chains.

It is found in the plastid. It localises to the organellar chromatophore thylakoid membrane. Functionally, f(1)F(0) ATP synthase produces ATP from ADP in the presence of a proton or sodium gradient. F-type ATPases consist of two structural domains, F(1) containing the extramembraneous catalytic core and F(0) containing the membrane proton channel, linked together by a central stalk and a peripheral stalk. During catalysis, ATP synthesis in the catalytic domain of F(1) is coupled via a rotary mechanism of the central stalk subunits to proton translocation. Component of the F(0) channel, it forms part of the peripheral stalk, linking F(1) to F(0). The sequence is that of ATP synthase subunit b, organellar chromatophore from Paulinella chromatophora.